The primary structure comprises 520 residues: Cyclin-L2 (520 aa).

An N-acetylalanine modification is found at alanine 2. Cyclin-like regions lie at residues 83–185 (ELIQ…RVLK) and 198–282 (KIIV…KILQ). The segment at 316–520 (LPGGTQVLDG…DHPGHSRHRR (205 aa)) is disordered. A phosphoserine mark is found at serine 330, serine 338, serine 348, and serine 351. Residues 357–367 (RRLEGAKKAKA) show a composition bias toward basic and acidic residues. Phosphoserine is present on serine 369. The span at 376–390 (KGRESRSRSRSREQS) shows a compositional bias: basic and acidic residues. The segment at 385 to 423 (RSREQSYSRSPSRSASPKRRKSDSGSTSGGSKSQSRSRS) is RS. Residues 408–436 (SGSTSGGSKSQSRSRSRSDSPPRQAPRSA) are compositionally biased toward low complexity. Positions 441-454 (SEIRGSRKSKDCKY) are enriched in basic and acidic residues. A compositionally biased stretch (basic residues) spans 456-471 (QKPHKSRSRSSSRSRS). 2 stretches are compositionally biased toward basic and acidic residues: residues 472–481 (RSRERADNPG) and 489–514 (YYRD…DHPG).

Belongs to the cyclin family. Cyclin L subfamily. In terms of assembly, interacts with CDK11A, CDK11B, CDK12, CDK13 and POLR2A, the hyperphosphorylated C-terminal domain (CTD) of RNA polymerase II. May form a ternary complex with CDK11B and casein kinase II (CKII). Interacts with pre-mRNA-splicing factors, including at least SRSF1, SRSF2 AND SRSF7/SLU7. In terms of tissue distribution, widely expressed.

The protein resides in the nucleus speckle. It is found in the nucleus. Its subcellular location is the nucleoplasm. Involved in pre-mRNA splicing. May induce cell death, possibly by acting on the transcription and RNA processing of apoptosis-related factors. The sequence is that of Cyclin-L2 (CCNL2) from Homo sapiens (Human).